Reading from the N-terminus, the 148-residue chain is MYVENSYLSKQLCFLFYVSSKEIIKKYTNYLKEYDLTYTGYIVLMAIENDEKLNIKKLGERVFLDSGTLTPLLKKLEKKDYVVRTREEKDERNLQISLTEQGKAIKSPLAEISVKVFNEFNISEREASDIINNLRNFVSKNFDYSDKK.

Positions 9–139 constitute an HTH marR-type domain; it reads SKQLCFLFYV…IINNLRNFVS (131 aa). The H-T-H motif DNA-binding region spans 55-78; sequence IKKLGERVFLDSGTLTPLLKKLEK.

This sequence belongs to the SarZ family.

Its subcellular location is the cytoplasm. In terms of biological role, activates transcription of virulence factors alpha- and beta hemolysin genes (hla and hlb). Also, activates RNAIII expression, a central regulator transcribed from the agr locus. The protein is HTH-type transcriptional regulator SarZ (sarZ) of Staphylococcus aureus (strain USA300).